The sequence spans 269 residues: Hydroxyethylthiazole kinase (269 aa).

Methionine 45 contributes to the substrate binding site. Residues arginine 121 and threonine 167 each contribute to the ATP site. Substrate is bound at residue glycine 194.

The protein belongs to the Thz kinase family. It depends on Mg(2+) as a cofactor.

The catalysed reaction is 5-(2-hydroxyethyl)-4-methylthiazole + ATP = 4-methyl-5-(2-phosphooxyethyl)-thiazole + ADP + H(+). It functions in the pathway cofactor biosynthesis; thiamine diphosphate biosynthesis; 4-methyl-5-(2-phosphoethyl)-thiazole from 5-(2-hydroxyethyl)-4-methylthiazole: step 1/1. Catalyzes the phosphorylation of the hydroxyl group of 4-methyl-5-beta-hydroxyethylthiazole (THZ). This Bacillus mycoides (strain KBAB4) (Bacillus weihenstephanensis) protein is Hydroxyethylthiazole kinase.